We begin with the raw amino-acid sequence, 150 residues long: C-type natriuretic peptide (150 aa).

Residues 1–31 (MSISSSSSSSSSSSSCLLLISLMLLAASCQG) form the signal peptide. Residues 32-127 (RPDLQHRNHK…RKMFRGRTKK (96 aa)) constitute a propeptide that is removed on maturation. Residues 60–73 (GAADGSSGEEAALS) show a composition bias toward low complexity. The tract at residues 60 to 109 (GAADGSSGEEAALSQRAPPSIRALHPRSGRLGLRDDLEAEPPAENKPRRR) is disordered. Cys134 and Cys150 form a disulfide bridge.

The protein belongs to the natriuretic peptide family. Expressed in brain, but not in atrium or ventricle.

The protein localises to the secreted. In terms of biological role, hormone which plays a role in endochondral ossification through regulation of cartilaginous growth plate chondrocytes proliferation and differentiation. May also be vasoactive and natriuretic. The protein is C-type natriuretic peptide (cnp) of Acipenser transmontanus (White sturgeon).